A 331-amino-acid chain; its full sequence is 6-phosphogluconolactonase (331 aa).

This sequence belongs to the cycloisomerase 2 family.

It catalyses the reaction 6-phospho-D-glucono-1,5-lactone + H2O = 6-phospho-D-gluconate + H(+). It participates in carbohydrate degradation; pentose phosphate pathway; D-ribulose 5-phosphate from D-glucose 6-phosphate (oxidative stage): step 2/3. Functionally, catalyzes the hydrolysis of 6-phosphogluconolactone to 6-phosphogluconate. This Salmonella agona (strain SL483) protein is 6-phosphogluconolactonase.